The primary structure comprises 508 residues: Anthranilate synthase component 1 (508 aa).

L-tryptophan is bound by residues S51 and P283 to M285. G323–T324 serves as a coordination point for chorismate. E350 contributes to the Mg(2+) binding site. Chorismate-binding positions include Y438, R458, G477 to G479, and G479. E492 is a binding site for Mg(2+).

It belongs to the anthranilate synthase component I family. Heterotetramer consisting of two non-identical subunits: a beta subunit (TrpG) and a large alpha subunit (TrpE). It depends on Mg(2+) as a cofactor.

The enzyme catalyses chorismate + L-glutamine = anthranilate + pyruvate + L-glutamate + H(+). It participates in amino-acid biosynthesis; L-tryptophan biosynthesis; L-tryptophan from chorismate: step 1/5. Feedback inhibited by tryptophan. Part of a heterotetrameric complex that catalyzes the two-step biosynthesis of anthranilate, an intermediate in the biosynthesis of L-tryptophan. In the first step, the glutamine-binding beta subunit (TrpG) of anthranilate synthase (AS) provides the glutamine amidotransferase activity which generates ammonia as a substrate that, along with chorismate, is used in the second step, catalyzed by the large alpha subunit of AS (TrpE) to produce anthranilate. In the absence of TrpG, TrpE can synthesize anthranilate directly from chorismate and high concentrations of ammonia. In Synechocystis sp. (strain ATCC 27184 / PCC 6803 / Kazusa), this protein is Anthranilate synthase component 1 (trpE).